We begin with the raw amino-acid sequence, 258 residues long: Imidazole glycerol phosphate synthase subunit HisF (258 aa).

Residues D11 and D130 contribute to the active site.

It belongs to the HisA/HisF family. As to quaternary structure, heterodimer of HisH and HisF.

Its subcellular location is the cytoplasm. The catalysed reaction is 5-[(5-phospho-1-deoxy-D-ribulos-1-ylimino)methylamino]-1-(5-phospho-beta-D-ribosyl)imidazole-4-carboxamide + L-glutamine = D-erythro-1-(imidazol-4-yl)glycerol 3-phosphate + 5-amino-1-(5-phospho-beta-D-ribosyl)imidazole-4-carboxamide + L-glutamate + H(+). It functions in the pathway amino-acid biosynthesis; L-histidine biosynthesis; L-histidine from 5-phospho-alpha-D-ribose 1-diphosphate: step 5/9. In terms of biological role, IGPS catalyzes the conversion of PRFAR and glutamine to IGP, AICAR and glutamate. The HisF subunit catalyzes the cyclization activity that produces IGP and AICAR from PRFAR using the ammonia provided by the HisH subunit. The polypeptide is Imidazole glycerol phosphate synthase subunit HisF (Shigella boydii serotype 4 (strain Sb227)).